We begin with the raw amino-acid sequence, 152 residues long: Ribosome maturation factor RimP (152 aa).

It belongs to the RimP family.

Its subcellular location is the cytoplasm. Required for maturation of 30S ribosomal subunits. In Burkholderia orbicola (strain MC0-3), this protein is Ribosome maturation factor RimP.